The primary structure comprises 230 residues: Cytochrome c oxidase subunit 2 (230 aa).

Residues 1–29 (NNFFQGYNLLFQHSLFASYMDWFHAFNCS) lie on the Mitochondrial intermembrane side of the membrane. A helical membrane pass occupies residues 30-50 (LLLGVLVFVTLLFGYLIFSTF). Topologically, residues 51-63 (YFKSKKIEYQFGE) are mitochondrial matrix. Residues 64–84 (LLCSIFPTIILLMQMVPSLSL) form a helical membrane-spanning segment. The Mitochondrial intermembrane segment spans residues 85-230 (LYYYGLMNLD…FKSWCFGTME (146 aa)). Positions 163, 198, 200, 202, 206, and 209 each coordinate Cu cation. Residue Glu-200 participates in Mg(2+) binding.

It belongs to the cytochrome c oxidase subunit 2 family. In terms of assembly, component of the cytochrome c oxidase (complex IV, CIV), a multisubunit enzyme composed of a catalytic core of 3 subunits and several supernumerary subunits. The complex exists as a monomer or a dimer and forms supercomplexes (SCs) in the inner mitochondrial membrane with ubiquinol-cytochrome c oxidoreductase (cytochrome b-c1 complex, complex III, CIII). The cofactor is Cu cation.

It is found in the mitochondrion inner membrane. The enzyme catalyses 4 Fe(II)-[cytochrome c] + O2 + 8 H(+)(in) = 4 Fe(III)-[cytochrome c] + 2 H2O + 4 H(+)(out). In terms of biological role, component of the cytochrome c oxidase, the last enzyme in the mitochondrial electron transport chain which drives oxidative phosphorylation. The respiratory chain contains 3 multisubunit complexes succinate dehydrogenase (complex II, CII), ubiquinol-cytochrome c oxidoreductase (cytochrome b-c1 complex, complex III, CIII) and cytochrome c oxidase (complex IV, CIV), that cooperate to transfer electrons derived from NADH and succinate to molecular oxygen, creating an electrochemical gradient over the inner membrane that drives transmembrane transport and the ATP synthase. Cytochrome c oxidase is the component of the respiratory chain that catalyzes the reduction of oxygen to water. Electrons originating from reduced cytochrome c in the intermembrane space (IMS) are transferred via the dinuclear copper A center (CU(A)) of subunit 2 and heme A of subunit 1 to the active site in subunit 1, a binuclear center (BNC) formed by heme A3 and copper B (CU(B)). The BNC reduces molecular oxygen to 2 water molecules using 4 electrons from cytochrome c in the IMS and 4 protons from the mitochondrial matrix. The sequence is that of Cytochrome c oxidase subunit 2 (cox-2) from Caenorhabditis remanei (Caenorhabditis vulgaris).